A 342-amino-acid polypeptide reads, in one-letter code: Foldase protein PrsA (342 aa).

The signal sequence occupies residues 1 to 20; sequence MKKKLILAAAGAMAVFSLAA. Cysteine 21 is lipidated: N-palmitoyl cysteine. Residue cysteine 21 is the site of S-diacylglycerol cysteine attachment. Residues 142–235 enclose the PpiC domain; sequence HPEVEAQIIQ…QTYQTTYYVV (94 aa). The disordered stretch occupies residues 297–342; sequence MQTESSSASSEKKESKSSDSKTSDTKTSDSEKATDSSSKTTESSSK. A compositionally biased stretch (basic and acidic residues) spans 306–330; it reads SEKKESKSSDSKTSDTKTSDSEKAT. The span at 331-342 shows a compositional bias: low complexity; sequence DSSSKTTESSSK.

Belongs to the PrsA family.

The protein resides in the cell membrane. The catalysed reaction is [protein]-peptidylproline (omega=180) = [protein]-peptidylproline (omega=0). Functionally, plays a major role in protein secretion by helping the post-translocational extracellular folding of several secreted proteins. In Enterococcus faecalis (strain ATCC 700802 / V583), this protein is Foldase protein PrsA.